Here is a 732-residue protein sequence, read N- to C-terminus: Elongation factor 2 (732 aa).

The region spanning 19-228 is the tr-type G domain; sequence ELVRNIGIVA…TKITFKDIVE (210 aa). GTP is bound by residues 28–35, 94–98, and 148–151; these read AHIDHGKT, DTPGH, and NKID. His-598 bears the Diphthamide mark.

The protein belongs to the TRAFAC class translation factor GTPase superfamily. Classic translation factor GTPase family. EF-G/EF-2 subfamily.

Its subcellular location is the cytoplasm. In terms of biological role, catalyzes the GTP-dependent ribosomal translocation step during translation elongation. During this step, the ribosome changes from the pre-translocational (PRE) to the post-translocational (POST) state as the newly formed A-site-bound peptidyl-tRNA and P-site-bound deacylated tRNA move to the P and E sites, respectively. Catalyzes the coordinated movement of the two tRNA molecules, the mRNA and conformational changes in the ribosome. The protein is Elongation factor 2 of Thermoplasma volcanium (strain ATCC 51530 / DSM 4299 / JCM 9571 / NBRC 15438 / GSS1).